We begin with the raw amino-acid sequence, 716 residues long: Phospholipid phosphatase-related protein type 3 (716 aa).

Transmembrane regions (helical) follow at residues 18–38 (LPCFYFVELPIVASSVVSLYF), 70–90 (LIPLLMLLSLAFAAPAASIMV), and 131–151 (FVGVHVFGLCATALVTDVIQL). The N-linked (GlcNAc...) asparagine glycan is linked to asparagine 167. The next 3 helical transmembrane spans lie at 205–225 (HATLSAFAAVYVSMYFNSVIS), 231–251 (LKPILVFAFAIAAGVCGLTQI), and 261–281 (VYAGFLIGAGIAAYLACHAVG). The interval 311 to 334 (SMYQQNKSVSTDELGPPGRLEGVP) is disordered. Residues 312–321 (MYQQNKSVST) show a composition bias toward polar residues. A glycan (N-linked (GlcNAc...) asparagine) is linked at asparagine 316. Phosphoserine is present on residues serine 320 and serine 351. Threonine 374 carries the post-translational modification Phosphothreonine. Residues 416–488 (GRGLGLPDEA…RVILPPRPGP (73 aa)) form a disordered region. Serine 426 is modified (phosphoserine). Residues 437-460 (VAEEEEEEEEEEEEEEEEEEEEEG) are compositionally biased toward acidic residues. At serine 506 the chain carries Phosphoserine. The segment at 548 to 589 (AMSKAAGGPKAETASSSSASSDSSQYRSPSDRDSASIVTIDA) is disordered. Residues 562-575 (SSSSASSDSSQYRS) are compositionally biased toward low complexity. Serine 641 is subject to Phosphoserine. The disordered stretch occupies residues 664–694 (GEGLPPPGASEGALGAGSRESTLRRQVGALG).

This sequence belongs to the PA-phosphatase related phosphoesterase family.

It localises to the membrane. The chain is Phospholipid phosphatase-related protein type 3 from Rattus norvegicus (Rat).